A 157-amino-acid polypeptide reads, in one-letter code: SsrA-binding protein (157 aa).

A disordered region spans residues 132-157 (EHDKRDTIKEREGKREVERAMKSRHR).

Belongs to the SmpB family.

The protein localises to the cytoplasm. Functionally, required for rescue of stalled ribosomes mediated by trans-translation. Binds to transfer-messenger RNA (tmRNA), required for stable association of tmRNA with ribosomes. tmRNA and SmpB together mimic tRNA shape, replacing the anticodon stem-loop with SmpB. tmRNA is encoded by the ssrA gene; the 2 termini fold to resemble tRNA(Ala) and it encodes a 'tag peptide', a short internal open reading frame. During trans-translation Ala-aminoacylated tmRNA acts like a tRNA, entering the A-site of stalled ribosomes, displacing the stalled mRNA. The ribosome then switches to translate the ORF on the tmRNA; the nascent peptide is terminated with the 'tag peptide' encoded by the tmRNA and targeted for degradation. The ribosome is freed to recommence translation, which seems to be the essential function of trans-translation. This Paracidovorax citrulli (strain AAC00-1) (Acidovorax citrulli) protein is SsrA-binding protein.